The sequence spans 391 residues: Probable protein phosphatase 2C 32 (391 aa).

Residues 1–53 (MSCTVAIPSSPVFSPSRRPLSCKAASASASPESVSVAASSPAQAAPPAGSPLR) are disordered. Positions 8-51 (PSSPVFSPSRRPLSCKAASASASPESVSVAASSPAQAAPPAGSP) are enriched in low complexity. Residues 95–115 (LVVPVCGGAAAAAAAAAVAAV) traverse the membrane as a helical segment. The 258-residue stretch at 129 to 386 (EFAVYCRRGK…DDISIVIIQL (258 aa)) folds into the PPM-type phosphatase domain. Mn(2+) contacts are provided by Asp-168, Gly-169, Asp-332, and Asp-377.

It belongs to the PP2C family. Mg(2+) is required as a cofactor. It depends on Mn(2+) as a cofactor.

The protein localises to the membrane. It carries out the reaction O-phospho-L-seryl-[protein] + H2O = L-seryl-[protein] + phosphate. The enzyme catalyses O-phospho-L-threonyl-[protein] + H2O = L-threonyl-[protein] + phosphate. The sequence is that of Probable protein phosphatase 2C 32 from Oryza sativa subsp. japonica (Rice).